The chain runs to 224 residues: Synaptogyrin-2 (224 aa).

Methionine 1 bears the N-acetylmethionine mark. Serine 3 bears the Phosphoserine mark. One can recognise an MARVEL domain in the interval 20–171; that stretch reads FLSQPQVVTR…LASLAYQRYK (152 aa). A run of 4 helical transmembrane segments spans residues 31 to 51, 72 to 92, 105 to 125, and 147 to 167; these read VSMV…YTNI, SAIG…DAFF, VIGD…GFCF, and AAIT…SLAY.

It belongs to the synaptogyrin family. Post-translationally, may be tyrosine phosphorylated by Src.

It is found in the cytoplasmic vesicle membrane. The protein resides in the cytoplasmic vesicle. Its subcellular location is the secretory vesicle. It localises to the synaptic vesicle membrane. Functionally, may play a role in regulated exocytosis. In neuronal cells, modulates the localization of synaptophysin/SYP into synaptic-like microvesicles and may therefore play a role in the formation and/or the maturation of this vesicles. May also play a role in GLUT4 storage and transport to the plasma membrane. The sequence is that of Synaptogyrin-2 from Mus musculus (Mouse).